The primary structure comprises 180 residues: Small ribosomal subunit protein bS16 (180 aa).

Belongs to the bacterial ribosomal protein bS16 family.

The chain is Small ribosomal subunit protein bS16 from Flavobacterium psychrophilum (strain ATCC 49511 / DSM 21280 / CIP 103535 / JIP02/86).